The sequence spans 354 residues: Protein Wnt-11 (354 aa).

A signal peptide spans 1 to 24 (MKPSPQFFLAAFLSLILQTGICYG). Residues Asn40 and Asn90 are each glycosylated (N-linked (GlcNAc...) asparagine). 11 cysteine pairs are disulfide-bonded: Cys80–Cys91, Cys130–Cys138, Cys140–Cys157, Cys209–Cys223, Cys211–Cys218, Cys283–Cys314, Cys299–Cys309, Cys313–Cys353, Cys329–Cys344, Cys331–Cys341, and Cys336–Cys337. The O-palmitoleoyl serine; by PORCN moiety is linked to residue Ser215. Residues Asn300 and Asn304 are each glycosylated (N-linked (GlcNAc...) asparagine).

This sequence belongs to the Wnt family. In terms of processing, palmitoleoylation is required for efficient binding to frizzled receptors. Depalmitoleoylation leads to Wnt signaling pathway inhibition. Expressed in the dermatome. The expression domain is mutually exclusive to the other Wnt genes.

The protein resides in the secreted. It is found in the extracellular space. The protein localises to the extracellular matrix. In terms of biological role, ligand for members of the frizzled family of seven transmembrane receptors. May play a role in the formation of dermal structure, both limb and feather buds. Is likely to signal over only few cell diameters. This chain is Protein Wnt-11 (WNT11), found in Gallus gallus (Chicken).